The following is a 263-amino-acid chain: Norsolorinic acid ketoreductase stcE (263 aa).

NADP(+)-binding residues include Leu-29, Asp-76, Asn-105, Tyr-177, Lys-181, Ile-208, and Ser-210. Tyr-177 acts as the Proton donor in catalysis. Lys-181 (lowers pKa of active site Tyr) is an active-site residue.

It belongs to the short-chain dehydrogenases/reductases (SDR) family.

The catalysed reaction is (1'S)-averantin + NADP(+) = norsolorinic acid + NADPH + H(+). It functions in the pathway mycotoxin biosynthesis; sterigmatocystin biosynthesis. In terms of biological role, short chain dehydrogenase; part of the gene cluster that mediates the biosynthesis of sterigmatocystin (ST), a polyketide-derived furanocoumarin which is part of the most toxic and carcinogenic compounds among the known mycotoxins. The first step in the biosynthesis of sterigmatocystin is the production of hexanoate by the fatty acid synthase (FAS) units stcJ and stcK. The polyketide backbone is assembled by the non-reducing polyketide synthase stcA by condensation of the starter hexanoyl-CoA and 7 malonyl-CoA extender units followed by cyclization and release of norsolorinic acid. Norsolorinic acid is the first stable intermediate in the biosynthesis of sterigmatocystin and is converted into averantin (AVN) by the ketoreductase stcE which reduces the hexanoate ketone to an alcohol. Averantin is then oxidized into 5'-hydroxyaverantin (HAVN) by the cytochrome P450 monooxygenase stcF. 5'-hydroxyaverantin is further converted to 5'-oxyaverantin (OAVN) by the 5'-hydroxyaverantin dehydrogenase stcG. The next step is the conversion of OAVN into averufin (AVF) which is catalyzed by a yet to be identified enzyme. The cytochrome P450 monooxygenase stcB and the flavin-binding monooxygenase stcW are both required for the conversion of averufin to 1-hydroxyversicolorone. The esterase stcI probably catalyzes the formation of versiconal hemiacetal acetate from 1-hydroxyversicolorone. The oxydoreductase stcN then probably catalyzes the biosynthetic step from versiconal to versicolorin B (VERB). The next step is performed by the versicolorin B desaturase stcL to produce versicolorin A (VERA). The ketoreductase stcU and the cytochrome P450 monooxygenase stcS are involved in the conversion of versicolorin A to demethylsterigmatocystin. The Baeyer-Villiger oxidas stcQ and the reductase stcR might be involved in the biosynthetic step from versicolorin A to demethylsterigmatocystin. The final step in the biosynthesis of sterigmatocystin is the methylation of demethylsterigmatocystin catalyzed by the methyltransferase stcP. In Emericella nidulans (strain FGSC A4 / ATCC 38163 / CBS 112.46 / NRRL 194 / M139) (Aspergillus nidulans), this protein is Norsolorinic acid ketoreductase stcE.